Consider the following 302-residue polypeptide: uncharacterized protein (302 aa).

A run of 10 helical transmembrane segments spans residues 13–32 (GILLAISAYTMWGIAPIYFK), 42–64 (ILSHRVVWSFVLLAVLIHLGRRW), 77–96 (FWLLLVTALLVGGNWLIFIW), 106–125 (ASLGYYINPLLNVLLGMLFL), 132–150 (LQWFAVALAAIGVGIQLVV), 154–171 (VPIVAIALATSFGFYGLL), 183–202 (LFLETLFMLPAAAIYLIWLA), 217–239 (NLLLVCAGVVTTLPLLCFTGAAA), 246–265 (LGFFQYIGPSLMFLLAVLVY), and 275–297 (ITFAFIWSALVIFSVDGLKAGHA). Residues 22-149 (TMWGIAPIYF…AAIGVGIQLV (128 aa)) enclose the EamA domain.

Belongs to the EamA transporter family.

It is found in the cell membrane. This is an uncharacterized protein from Vibrio cholerae serotype O1 (strain ATCC 39315 / El Tor Inaba N16961).